We begin with the raw amino-acid sequence, 434 residues long: Adenylosuccinate synthetase (434 aa).

GTP contacts are provided by residues 22 to 28 and 50 to 52; these read GDEGKGK and GHT. The active-site Proton acceptor is the Asp23. Asp23 and Gly50 together coordinate Mg(2+). IMP contacts are provided by residues 23-26, 48-51, Thr139, Arg153, Gln234, Thr249, and Arg313; these read DEGK and NAGH. His51 functions as the Proton donor in the catalytic mechanism. 309–315 provides a ligand contact to substrate; sequence ATTGRKR. Residues Arg315, 341-343, and 423-425 contribute to the GTP site; these read KLD and SVG.

It belongs to the adenylosuccinate synthetase family. In terms of assembly, homodimer. Mg(2+) serves as cofactor.

Its subcellular location is the cytoplasm. It catalyses the reaction IMP + L-aspartate + GTP = N(6)-(1,2-dicarboxyethyl)-AMP + GDP + phosphate + 2 H(+). It participates in purine metabolism; AMP biosynthesis via de novo pathway; AMP from IMP: step 1/2. Plays an important role in the de novo pathway of purine nucleotide biosynthesis. Catalyzes the first committed step in the biosynthesis of AMP from IMP. The chain is Adenylosuccinate synthetase from Pelodictyon phaeoclathratiforme (strain DSM 5477 / BU-1).